Reading from the N-terminus, the 160-residue chain is 2-C-methyl-D-erythritol 2,4-cyclodiphosphate synthase (160 aa).

Positions 11 and 13 each coordinate a divalent metal cation. 4-CDP-2-C-methyl-D-erythritol 2-phosphate is bound by residues 11–13 and 37–38; these read DIH and HS. His45 is a binding site for a divalent metal cation. 4-CDP-2-C-methyl-D-erythritol 2-phosphate is bound by residues 59 to 61, 135 to 138, and Arg145; these read DIG and TTNE.

The protein belongs to the IspF family. Homotrimer. The cofactor is a divalent metal cation.

It carries out the reaction 4-CDP-2-C-methyl-D-erythritol 2-phosphate = 2-C-methyl-D-erythritol 2,4-cyclic diphosphate + CMP. Its pathway is isoprenoid biosynthesis; isopentenyl diphosphate biosynthesis via DXP pathway; isopentenyl diphosphate from 1-deoxy-D-xylulose 5-phosphate: step 4/6. Functionally, involved in the biosynthesis of isopentenyl diphosphate (IPP) and dimethylallyl diphosphate (DMAPP), two major building blocks of isoprenoid compounds. Catalyzes the conversion of 4-diphosphocytidyl-2-C-methyl-D-erythritol 2-phosphate (CDP-ME2P) to 2-C-methyl-D-erythritol 2,4-cyclodiphosphate (ME-CPP) with a corresponding release of cytidine 5-monophosphate (CMP). This Synechococcus elongatus (strain ATCC 33912 / PCC 7942 / FACHB-805) (Anacystis nidulans R2) protein is 2-C-methyl-D-erythritol 2,4-cyclodiphosphate synthase.